A 523-amino-acid chain; its full sequence is Cytochrome P450 monooxygenase bsc5 (523 aa).

Residues 16-36 (MQLHWTVLGLLPVLFIAILGP) form a helical membrane-spanning segment. Residues Asn-178, Asn-281, and Asn-403 are each glycosylated (N-linked (GlcNAc...) asparagine). Heme is bound at residue Cys-459.

Belongs to the cytochrome P450 family. Heme is required as a cofactor.

The protein resides in the membrane. It participates in mycotoxin biosynthesis. Cytochrome P450 monooxygenase; part of the gene cluster that mediates the biosynthesis of the diterpene glucoside brassicicene C. In the first step of the brassicicene C biosynthesis, the bifunctional diterpene synthase bsc8 that possesses both prenyl transferase and terpene cyclase activity, converts isopentenyl diphosphate and dimethylallyl diphosphate into geranylgeranyl diphosphate (GGDP) that is further converted into fusicocca-2,10(14)-diene, the first precursor for brassicicene C. Fusicocca-2,10(14)-diene is then substrate of cytochrome P450 monooxygenase bsc1 for hydroxylation at the C-8 position. Oxidation at C-16 position to aldehyde is then catalyzed by the cytochrome P450 monooyxygenase bsc7, yielding fusicocca-2,10(14)-diene-8-beta,16-diol. Follows the isomerization of the double bond and reduction of aldehyde to alcohol catalyzed by the short-chain dehydrogenase/reductase bsc3 to yield the diol compound fusicocca-1,10(14)-diene-8 beta,16-diol. The next step is the oxidation at the C-3 position of fusicocca-2,10(14)-diene-8-beta,16-diol catalyzed by the alpha-ketoglutarate dependent dioxygenase bsc9, to produce a triol compound. Methylation of the hydroxy group at position 16 is performed by the methyltransferase bsc6. 16-O-methylation is followed by oxidation at the C-13 position to ketone and an alkyl shift of the methyl group leads to brassicicene C. Although the probable acetyltransferase bsc4 is included in the gene cluster, no acetylation reactions are necessary for brassicicene C biosynthesis. However, the fact that brassicicene E, which is a structurally related compound having an acetoxy group at position 12, was previously isolated from another strain of A.brassicicola suggests that the ATCC 96836 strain might also produce a small amount of brassicicene E. The protein is Cytochrome P450 monooxygenase bsc5 of Alternaria brassicicola (Dark leaf spot agent).